The sequence spans 253 residues: Ciliary microtubule associated protein 1B (253 aa).

An STPGR repeat occupies 182-207 (PGPCAYQVVSPGVYKSRAPQFTILAR).

Belongs to the CIMAP family.

It localises to the cell projection. It is found in the cilium. Its subcellular location is the flagellum. This is Ciliary microtubule associated protein 1B from Homo sapiens (Human).